The primary structure comprises 463 residues: Elongation factor 1-alpha (463 aa).

The tr-type G domain maps to 8–245 (KTHLNIVIIG…DALVPPVRPA (238 aa)). Positions 17 to 24 (GHVDSGKS) are G1. 17-24 (GHVDSGKS) contacts GTP. Residues 73–77 (GITID) are G2. Positions 94–97 (DAPG) are G3. GTP-binding positions include 94 to 98 (DAPGH) and 156 to 159 (NKMD). The interval 156 to 159 (NKMD) is G4. Residues 197–199 (SGW) form a G5 region.

The protein belongs to the TRAFAC class translation factor GTPase superfamily. Classic translation factor GTPase family. EF-Tu/EF-1A subfamily. The 42S RNP particle comprises four subunits each of which contains one molecule of 5S RNA, three molecules of tRNA, two molecules of EF1-alpha and one molecule of the 5S RNA binding protein 43.

It localises to the cytoplasm. Its function is as follows. This protein is one of two protein components of a 42S RNP particle that is very abundant in previtellogenic oocytes. A major function served by 42sp50 appears to be the storage of tRNAs for later use in oogenesis and early embryogenesis. Purified 42S particles can directly transfer aminoacyl tRNA to ribosomes. This is Elongation factor 1-alpha from Xenopus laevis (African clawed frog).